Reading from the N-terminus, the 109-residue chain is Cytochrome bo(3) ubiquinol oxidase subunit 4 (109 aa).

Residues 1-17 (MSHSTDHSGASHGSVKT) are Cytoplasmic-facing. Residues 18 to 36 (YMTGFILSIILTVIPFWMV) form a helical membrane-spanning segment. The Periplasmic portion of the chain corresponds to 37–45 (MTGAASPAV). Residues 46–64 (ILGTILAMAVVQVLVHLVC) traverse the membrane as a helical segment. At 65 to 80 (FLHMNTKSDEGWNMTA) the chain is on the cytoplasmic side. The helical transmembrane segment at 81–99 (FVFTVLIIAILVVGSIWIM) threads the bilayer. The Periplasmic portion of the chain corresponds to 100–109 (WNLNYNMMMH).

The protein belongs to the cytochrome c oxidase bacterial subunit 4 family. Heterooctamer of two A chains, two B chains, two C chains and two D chains.

The protein localises to the cell inner membrane. Its function is as follows. Cytochrome bo(3) ubiquinol terminal oxidase is the component of the aerobic respiratory chain of E.coli that predominates when cells are grown at high aeration. Has proton pump activity across the membrane in addition to electron transfer, pumping 2 protons/electron. In Escherichia coli O157:H7, this protein is Cytochrome bo(3) ubiquinol oxidase subunit 4 (cyoD).